Reading from the N-terminus, the 66-residue chain is DNA gyrase inhibitor YacG (66 aa).

Zn(2+)-binding residues include cysteine 9, cysteine 12, cysteine 28, and cysteine 32. The interval 45 to 66 (HKIAGAEESEDELYSGDLEPRH) is disordered.

This sequence belongs to the DNA gyrase inhibitor YacG family. Interacts with GyrB. It depends on Zn(2+) as a cofactor.

Its function is as follows. Inhibits all the catalytic activities of DNA gyrase by preventing its interaction with DNA. Acts by binding directly to the C-terminal domain of GyrB, which probably disrupts DNA binding by the gyrase. This chain is DNA gyrase inhibitor YacG, found in Pseudomonas entomophila (strain L48).